Reading from the N-terminus, the 20-residue chain is Disintegrin (20 aa).

The 20-residue stretch at 1–20 (EAGEECDCGTPENPCCDAAT) folds into the Disintegrin domain. Intrachain disulfides connect Cys-6–Cys-15 and Cys-8–Cys-16.

Belongs to the venom metalloproteinase (M12B) family. P-II subfamily. P-IIa sub-subfamily. Monomer. In terms of tissue distribution, expressed by the venom gland.

Its subcellular location is the secreted. In terms of biological role, inhibits fibrinogen interaction with platelets. Acts by binding to alpha-IIb/beta-3 (ITGA2B/ITGB3) on the platelet surface and inhibits aggregation induced by ADP, thrombin, platelet-activating factor and collagen. This is Disintegrin from Bothrops fonsecai (Fonseca's lancehead).